Here is a 1034-residue protein sequence, read N- to C-terminus: AP-3 complex subunit delta (1034 aa).

HEAT repeat units lie at residues 35-72, 143-180, 181-217, 219-255, 258-297, 299-337, 338-374, 376-414, 415-452, and 570-609; these read KYIS…LGYD, DLSR…RYPE, ALRP…KNPK, YLPL…LEPR, KKLI…GMPN, SASI…THPK, SVQA…KKNL, EIVK…LYVT, NFEW…RVPV, and NSAC…EIVQ. Disordered stretches follow at residues 637–660, 669–688, 701–723, and 758–1034; these read DLDE…EHDK, QAGT…ELTP, EQSN…NADQ, and QEQQ…KEIL. Residue serine 683 is modified to Phosphoserine. Phosphothreonine is present on threonine 687. Positions 769–784 are enriched in basic residues; sequence GKKKHKKGKKSKKAKN. Composition is skewed to basic and acidic residues over residues 822 to 836 and 882 to 906; these read KDGK…RALD and KDKD…RKEA. Over residues 928-942 the composition is skewed to low complexity; the sequence is SATSNNNNTSTVLPD. Basic residues predominate over residues 986-1003; it reads KVHKKKHKKEKSQRKEKK. Residues 1007–1016 show a composition bias toward low complexity; sequence ESASVSAIVS. The segment covering 1025–1034 has biased composition (polar residues); it reads GISTPSKEIL.

This sequence belongs to the adaptor complexes large subunit family. As to quaternary structure, adaptor protein complex 3 (AP-3) is a heterotetramer composed of two large chains (delta and beta3), a medium chain (mu3) and a small chain (sigma3).

It is found in the cytoplasmic vesicle. Its subcellular location is the clathrin-coated vesicle membrane. The protein localises to the golgi apparatus. Its function is as follows. Part of the AP-3 complex, an adapter-related complex which is not clathrin-associated. The complex is associated with the Golgi region as well as more peripheral structures. It facilitates the budding of vesicles from the Golgi membrane and may be directly involved in trafficking to lysosomes. In terms of biological role, may be a coat protein involved in the formation of specialized structures like pigment granules. This is AP-3 complex subunit delta (g) from Drosophila melanogaster (Fruit fly).